The sequence spans 301 residues: N-acetylmuramic acid 6-phosphate etherase (301 aa).

Residues 57-220 (TYEKMLFGGR…STSLMIKKGK (164 aa)) enclose the SIS domain. The active-site Proton donor is the Glu-85. Residue Glu-116 is part of the active site.

This sequence belongs to the GCKR-like family. MurNAc-6-P etherase subfamily. As to quaternary structure, homodimer.

It carries out the reaction N-acetyl-D-muramate 6-phosphate + H2O = N-acetyl-D-glucosamine 6-phosphate + (R)-lactate. It participates in amino-sugar metabolism; N-acetylmuramate degradation. Its function is as follows. Specifically catalyzes the cleavage of the D-lactyl ether substituent of MurNAc 6-phosphate, producing GlcNAc 6-phosphate and D-lactate. The polypeptide is N-acetylmuramic acid 6-phosphate etherase (Clostridium botulinum (strain Eklund 17B / Type B)).